A 196-amino-acid polypeptide reads, in one-letter code: Phosphoheptose isomerase (196 aa).

The SIS domain maps to 35–194 (LTACLRCGGK…EKELFTPSGQ (160 aa)). Residue 50–52 (NGG) participates in substrate binding. Residues His59 and Glu63 each coordinate Zn(2+). Residues Glu63, 92–93 (ND), 118–120 (STS), Ser123, and Gln170 each bind substrate. Zn(2+) is bound by residues Gln170 and His178.

This sequence belongs to the SIS family. GmhA subfamily. As to quaternary structure, homotetramer. Zn(2+) serves as cofactor.

The protein localises to the cytoplasm. The enzyme catalyses 2 D-sedoheptulose 7-phosphate = D-glycero-alpha-D-manno-heptose 7-phosphate + D-glycero-beta-D-manno-heptose 7-phosphate. Its pathway is carbohydrate biosynthesis; D-glycero-D-manno-heptose 7-phosphate biosynthesis; D-glycero-alpha-D-manno-heptose 7-phosphate and D-glycero-beta-D-manno-heptose 7-phosphate from sedoheptulose 7-phosphate: step 1/1. Catalyzes the isomerization of sedoheptulose 7-phosphate in D-glycero-D-manno-heptose 7-phosphate. The protein is Phosphoheptose isomerase of Syntrophotalea carbinolica (strain DSM 2380 / NBRC 103641 / GraBd1) (Pelobacter carbinolicus).